Reading from the N-terminus, the 293-residue chain is Formamidopyrimidine-DNA glycosylase (293 aa).

Residue Pro2 is the Schiff-base intermediate with DNA of the active site. Glu3 (proton donor) is an active-site residue. Catalysis depends on Lys58, which acts as the Proton donor; for beta-elimination activity. Positions 104, 123, and 166 each coordinate DNA. The FPG-type zinc finger occupies 257 to 293 (KVYDREGETCKTPACGGTIKRFTQNGRSTFWCPKCQK). Catalysis depends on Arg283, which acts as the Proton donor; for delta-elimination activity.

It belongs to the FPG family. As to quaternary structure, monomer. The cofactor is Zn(2+).

The enzyme catalyses Hydrolysis of DNA containing ring-opened 7-methylguanine residues, releasing 2,6-diamino-4-hydroxy-5-(N-methyl)formamidopyrimidine.. It catalyses the reaction 2'-deoxyribonucleotide-(2'-deoxyribose 5'-phosphate)-2'-deoxyribonucleotide-DNA = a 3'-end 2'-deoxyribonucleotide-(2,3-dehydro-2,3-deoxyribose 5'-phosphate)-DNA + a 5'-end 5'-phospho-2'-deoxyribonucleoside-DNA + H(+). In terms of biological role, involved in base excision repair of DNA damaged by oxidation or by mutagenic agents. Acts as a DNA glycosylase that recognizes and removes damaged bases. Has a preference for oxidized purines, such as 7,8-dihydro-8-oxoguanine (8-oxoG). Has AP (apurinic/apyrimidinic) lyase activity and introduces nicks in the DNA strand. Cleaves the DNA backbone by beta-delta elimination to generate a single-strand break at the site of the removed base with both 3'- and 5'-phosphates. The polypeptide is Formamidopyrimidine-DNA glycosylase (Bradyrhizobium diazoefficiens (strain JCM 10833 / BCRC 13528 / IAM 13628 / NBRC 14792 / USDA 110)).